Here is a 111-residue protein sequence, read N- to C-terminus: X antigen family member 2 (111 aa).

Disordered stretches follow at residues 1-61 (MSWR…AAEI) and 77-111 (KTGD…KSQV). Positions 86–111 (TDVKGKILPKAEHFKMPEAGEGKSQV) are enriched in basic and acidic residues.

Belongs to the GAGE family.

In Homo sapiens (Human), this protein is X antigen family member 2 (XAGE2).